The chain runs to 362 residues: Methylthioribose-1-phosphate isomerase (362 aa).

Catalysis depends on D252, which acts as the Proton donor.

It belongs to the eIF-2B alpha/beta/delta subunits family. MtnA subfamily.

The protein localises to the cytoplasm. Its subcellular location is the nucleus. It carries out the reaction 5-(methylsulfanyl)-alpha-D-ribose 1-phosphate = 5-(methylsulfanyl)-D-ribulose 1-phosphate. It functions in the pathway amino-acid biosynthesis; L-methionine biosynthesis via salvage pathway; L-methionine from S-methyl-5-thio-alpha-D-ribose 1-phosphate: step 1/6. In terms of biological role, catalyzes the interconversion of methylthioribose-1-phosphate (MTR-1-P) into methylthioribulose-1-phosphate (MTRu-1-P). The polypeptide is Methylthioribose-1-phosphate isomerase (Drosophila mojavensis (Fruit fly)).